A 345-amino-acid chain; its full sequence is Peptidoglycan-recognition protein LE (345 aa).

Basic and acidic residues predominate over residues 1 to 16; that stretch reads MSESGIKKLSQERTRE. The interval 1–38 is disordered; the sequence is MSESGIKKLSQERTREWLASQEDEELESIAESSVVDSL. N-linked (GlcNAc...) asparagine glycans are attached at residues asparagine 52, asparagine 95, asparagine 98, and asparagine 106. The disordered stretch occupies residues 124-152; that stretch reads NRRDRRHVSPPRDNAPKTPTHFEDDYQDE. The N-acetylmuramoyl-L-alanine amidase domain occupies 198–324; that stretch reads PVKYVVILHT…CQCNSTESPG (127 aa). Peptidoglycan is bound by residues histidine 206, 229–240, arginine 254, 261–267, and 314–322; these read HIESRGWNDIAY, AHTLGYN, and HCQCNSTES. The N-linked (GlcNAc...) asparagine glycan is linked to asparagine 318.

Belongs to the N-acetylmuramoyl-L-alanine amidase 2 family. As to quaternary structure, monomer. Peptidoglycan binding induces oligomerization. Expressed in hemolymph. Localizes at the lumenal surface of the trachea (at protein level).

It localises to the secreted. Functionally, peptidoglycan-recognition protein that plays a key role in innate immunity by binding to murein peptidoglycans (PGN) of Gram-negative bacteria and activating the imd/Relish pathway. Has no activity against on Gram-positive bacteria. Binds to diaminopimelic acid-type PGN (DAP-type PGN), an activator of the imd/Relish pathway. Functions synergistically with PGRP-LC in producing resistance to E.coli and B.megaterium infections, which have the DAP-type peptidoglycan. Acts both upstream and in parallel with PGRP-LC in the imd/Relish pathway, and is required for infection-dependent activation of melanization. Required for Relish processing and nuclear translocation following proteolytic cleavage. Its localization suggests a role in the recognition and subsequent activation of the signaling at the first point of contact with invading bacteria. This chain is Peptidoglycan-recognition protein LE (PGRP-LE), found in Drosophila melanogaster (Fruit fly).